Consider the following 448-residue polypeptide: Potassium/proton antiporter CemA (448 aa).

A run of 4 helical transmembrane segments spans residues 224–244, 325–345, 373–393, and 408–428; these read ALAS…ISML, IILH…LFII, ILLL…EIVI, and IISC…KYWI.

The protein belongs to the CemA family.

The protein localises to the plastid. It localises to the chloroplast inner membrane. It carries out the reaction K(+)(in) + H(+)(out) = K(+)(out) + H(+)(in). Its function is as follows. Contributes to K(+)/H(+) antiport activity by supporting proton efflux to control proton extrusion and homeostasis in chloroplasts in a light-dependent manner to modulate photosynthesis. Prevents excessive induction of non-photochemical quenching (NPQ) under continuous-light conditions. Indirectly promotes efficient inorganic carbon uptake into chloroplasts. This Angiopteris evecta (Mule's foot fern) protein is Potassium/proton antiporter CemA.